The sequence spans 287 residues: Formamidopyrimidine-DNA glycosylase (287 aa).

P2 serves as the catalytic Schiff-base intermediate with DNA. The active-site Proton donor is E3. K58 (proton donor; for beta-elimination activity) is an active-site residue. Residues H104, R123, and R166 each coordinate DNA. Residues 251-287 (RVYDREGEPCPTPACKGVIAREVQAGRSTFFCPVCQV) form an FPG-type zinc finger. Residue R277 is the Proton donor; for delta-elimination activity of the active site.

The protein belongs to the FPG family. In terms of assembly, monomer. Requires Zn(2+) as cofactor.

The catalysed reaction is Hydrolysis of DNA containing ring-opened 7-methylguanine residues, releasing 2,6-diamino-4-hydroxy-5-(N-methyl)formamidopyrimidine.. The enzyme catalyses 2'-deoxyribonucleotide-(2'-deoxyribose 5'-phosphate)-2'-deoxyribonucleotide-DNA = a 3'-end 2'-deoxyribonucleotide-(2,3-dehydro-2,3-deoxyribose 5'-phosphate)-DNA + a 5'-end 5'-phospho-2'-deoxyribonucleoside-DNA + H(+). In terms of biological role, involved in base excision repair of DNA damaged by oxidation or by mutagenic agents. Acts as a DNA glycosylase that recognizes and removes damaged bases. Has a preference for oxidized purines, such as 7,8-dihydro-8-oxoguanine (8-oxoG). Has AP (apurinic/apyrimidinic) lyase activity and introduces nicks in the DNA strand. Cleaves the DNA backbone by beta-delta elimination to generate a single-strand break at the site of the removed base with both 3'- and 5'-phosphates. This Caulobacter vibrioides (strain ATCC 19089 / CIP 103742 / CB 15) (Caulobacter crescentus) protein is Formamidopyrimidine-DNA glycosylase.